The sequence spans 278 residues: Secoisolariciresinol dehydrogenase (278 aa).

Residues 23–28, Asp-47, Val-73, and Asn-99 each bind NAD(+); that span reads GGAGGI. Substrate contacts are provided by Ser-104 and Ser-164. Tyr-167 serves as the catalytic Proton donor/acceptor. NAD(+) is bound by residues Lys-171 and Val-200.

Belongs to the short-chain dehydrogenases/reductases (SDR) family. As to quaternary structure, homotetramer. Mostly expressed in stems and rhizomes, and, to a lower extent, in leaves.

The enzyme catalyses (-)-secoisolariciresinol + 2 NAD(+) = (-)-matairesinol + 2 NADH + 2 H(+). The protein operates within aromatic compound metabolism; phenylpropanoid biosynthesis. In terms of biological role, oxidoreductase involved in lignan biosynthesis. Also involved in the biosynthesis of etoposide, a chemotherapeutic compound of the topoisomerase inhibitor family. Catalyzes the stereospecific conversion of (-)-secoisolariciresinol to (-)-matairesinol via a lactol intermediate. The chain is Secoisolariciresinol dehydrogenase from Sinopodophyllum hexandrum (Himalayan may apple).